The primary structure comprises 81 residues: Short neurotoxin 1 (81 aa).

The first 21 residues, 1-21 (MKTLLLTLVVVTIVCLDLGYT), serve as a signal peptide directing secretion. Disulfide bonds link cysteine 24–cysteine 43, cysteine 38–cysteine 60, cysteine 62–cysteine 73, and cysteine 74–cysteine 79.

It belongs to the three-finger toxin family. Short-chain subfamily. Type I alpha-neurotoxin sub-subfamily. As to expression, expressed by the venom gland.

It localises to the secreted. Functionally, binds to muscle nicotinic acetylcholine receptor (nAChR) and inhibit acetylcholine from binding to the receptor, thereby impairing neuromuscular transmission. In Austrelaps superbus (Lowland copperhead snake), this protein is Short neurotoxin 1.